A 607-amino-acid chain; its full sequence is Palmitoyltransferase erf2 (607 aa).

2 disordered regions span residues 1 to 198 (MSSA…SAKL) and 217 to 272 (ANHN…HHAP). Over 1–305 (MSSAPETSDA…FQNSRDKPIN (305 aa)) the chain is Cytoplasmic. Residues 53–66 (SSRPPQSQRSLSRR) are compositionally biased toward low complexity. 4 stretches are compositionally biased toward polar residues: residues 73–102 (SSIT…SLTA), 125–156 (ETAT…SSAP), 176–192 (RNTS…SRSV), and 227–242 (SQRS…NGNT). Over residues 245 to 256 (EPRDNRAHERLS) the composition is skewed to basic and acidic residues. The segment covering 257–272 (SADSSPGSIQKQHHAP) has biased composition (polar residues). The helical transmembrane segment at 306–326 (IATGIFVVLPSALFFAYSAPW) threads the bilayer. Residues 327 to 330 (LWHH) lie on the Lumenal side of the membrane. The chain crosses the membrane as a helical span at residues 331 to 351 (ISPAVPILFAYLFYICFSSFI). The Cytoplasmic segment spans residues 352–449 (HASVVDPGII…NCVGRRNYRY (98 aa)). In terms of domain architecture, DHHC spans 405-455 (KYCKTCNIWRPPRCYHCRVCDNCVETLDHHCVWLNNCVGRRNYRYFFAFVS). C435 serves as the catalytic S-palmitoyl cysteine intermediate. A helical membrane pass occupies residues 450 to 470 (FFAFVSSATLLALFLLGASLA). Over 471–497 (HVLVYRAREGVSFGSAIDKWRVPWAMV) the chain is Lumenal. A helical transmembrane segment spans residues 498–518 (IYGALAAPYPASLWAYHLFLI). Topologically, residues 519-607 (GRGETTREYL…QHVPPTPRQG (89 aa)) are cytoplasmic. The disordered stretch occupies residues 570–607 (YQEGDQRLSAMKRKDRPRDVEAQADIEMQHVPPTPRQG).

The protein belongs to the DHHC palmitoyltransferase family. ERF2/ZDHHC9 subfamily. In terms of processing, autopalmitoylated.

Its subcellular location is the endoplasmic reticulum membrane. It carries out the reaction L-cysteinyl-[protein] + hexadecanoyl-CoA = S-hexadecanoyl-L-cysteinyl-[protein] + CoA. Functionally, palmitoyltransferase specific for Ras proteins. The protein is Palmitoyltransferase erf2 (erf2) of Aspergillus fumigatus (strain ATCC MYA-4609 / CBS 101355 / FGSC A1100 / Af293) (Neosartorya fumigata).